Here is a 131-residue protein sequence, read N- to C-terminus: Large ribosomal subunit protein eL32 (131 aa).

It belongs to the eukaryotic ribosomal protein eL32 family.

This chain is Large ribosomal subunit protein eL32 (RPL32), found in Candida glabrata (strain ATCC 2001 / BCRC 20586 / JCM 3761 / NBRC 0622 / NRRL Y-65 / CBS 138) (Yeast).